A 446-amino-acid polypeptide reads, in one-letter code: Phosphoglucosamine mutase (446 aa).

Residue S99 is the Phosphoserine intermediate of the active site. Mg(2+)-binding residues include S99, D242, D244, and D246. At S99 the chain carries Phosphoserine.

This sequence belongs to the phosphohexose mutase family. It depends on Mg(2+) as a cofactor. Activated by phosphorylation.

It carries out the reaction alpha-D-glucosamine 1-phosphate = D-glucosamine 6-phosphate. Catalyzes the conversion of glucosamine-6-phosphate to glucosamine-1-phosphate. The chain is Phosphoglucosamine mutase from Campylobacter fetus subsp. fetus (strain 82-40).